The chain runs to 335 residues: Methionyl-tRNA formyltransferase (335 aa).

S122–P125 lines the (6S)-5,6,7,8-tetrahydrofolate pocket. The disordered stretch occupies residues D203–R222.

The protein belongs to the Fmt family.

It carries out the reaction L-methionyl-tRNA(fMet) + (6R)-10-formyltetrahydrofolate = N-formyl-L-methionyl-tRNA(fMet) + (6S)-5,6,7,8-tetrahydrofolate + H(+). Attaches a formyl group to the free amino group of methionyl-tRNA(fMet). The formyl group appears to play a dual role in the initiator identity of N-formylmethionyl-tRNA by promoting its recognition by IF2 and preventing the misappropriation of this tRNA by the elongation apparatus. In Rhodopirellula baltica (strain DSM 10527 / NCIMB 13988 / SH1), this protein is Methionyl-tRNA formyltransferase.